A 284-amino-acid chain; its full sequence is tRNA uridine(34) hydroxylase (284 aa).

The Rhodanese domain occupies 132-226 (DGRPVVMLDT…YFEEVGGAHY (95 aa)). Catalysis depends on C186, which acts as the Cysteine persulfide intermediate.

Belongs to the TrhO family.

The catalysed reaction is uridine(34) in tRNA + AH2 + O2 = 5-hydroxyuridine(34) in tRNA + A + H2O. Its function is as follows. Catalyzes oxygen-dependent 5-hydroxyuridine (ho5U) modification at position 34 in tRNAs. This Burkholderia vietnamiensis (strain G4 / LMG 22486) (Burkholderia cepacia (strain R1808)) protein is tRNA uridine(34) hydroxylase.